A 229-amino-acid polypeptide reads, in one-letter code: Enolase-phosphatase E1 (229 aa).

The protein belongs to the HAD-like hydrolase superfamily. MasA/MtnC family. As to quaternary structure, monomer. The cofactor is Mg(2+).

It carries out the reaction 5-methylsulfanyl-2,3-dioxopentyl phosphate + H2O = 1,2-dihydroxy-5-(methylsulfanyl)pent-1-en-3-one + phosphate. It participates in amino-acid biosynthesis; L-methionine biosynthesis via salvage pathway; L-methionine from S-methyl-5-thio-alpha-D-ribose 1-phosphate: step 3/6. Its pathway is amino-acid biosynthesis; L-methionine biosynthesis via salvage pathway; L-methionine from S-methyl-5-thio-alpha-D-ribose 1-phosphate: step 4/6. In terms of biological role, bifunctional enzyme that catalyzes the enolization of 2,3-diketo-5-methylthiopentyl-1-phosphate (DK-MTP-1-P) into the intermediate 2-hydroxy-3-keto-5-methylthiopentenyl-1-phosphate (HK-MTPenyl-1-P), which is then dephosphorylated to form the acireductone 1,2-dihydroxy-3-keto-5-methylthiopentene (DHK-MTPene). This chain is Enolase-phosphatase E1, found in Yersinia pestis (strain Pestoides F).